The sequence spans 729 residues: Monosaccharide-sensing protein 2 (729 aa).

6 helical membrane-spanning segments follow: residues 1–21 (MSGA…QGWD), 47–67 (LIVA…GGVA), 81–101 (ILYF…VLLL), 104–124 (LLDG…ISET), 139–159 (FTGS…SLMP), and 165–185 (LMLG…VFFL). Residues 347 to 363 (VGEGEDYPSDHGDDSED) show a composition bias toward acidic residues. Disordered stretches follow at residues 347–367 (VGEG…DLHS) and 423–442 (ERED…RRGS). Over residues 423 to 434 (EREDESGQKEEG) the composition is skewed to basic and acidic residues. Residues S438 and G448 each carry the phosphoserine modification. 6 helical membrane-spanning segments follow: residues 507 to 527 (ALVV…NGVL), 553 to 573 (ASLL…AVAM), 585 to 605 (LLTT…SNLV), 610 to 630 (IVHA…FVMG), 650 to 670 (ICIA…TYSL), and 679 to 699 (LAGV…FVFI).

It belongs to the major facilitator superfamily. Sugar transporter (TC 2.A.1.1) family. Mostly expressed in roots and stems, and, to a lower extent, in juvenile and adult leaves, and in flower tissues.

The protein localises to the vacuole membrane. The catalysed reaction is D-glucose(out) + H(+)(in) = D-glucose(in) + H(+)(out). It carries out the reaction sucrose(out) + H(+)(in) = sucrose(in) + H(+)(out). In terms of biological role, sugar proton-coupled antiporter which contributes to vacuolar sugar import (e.g. monosaccharides including glucose, sucrose and fructose), particularly during stress responses (e.g. in response to cold). The polypeptide is Monosaccharide-sensing protein 2 (Arabidopsis thaliana (Mouse-ear cress)).